Consider the following 269-residue polypeptide: 5'-nucleotidase SurE (269 aa).

A divalent metal cation-binding residues include Asp-11, Asp-12, Ser-43, and Asn-101.

It belongs to the SurE nucleotidase family. Requires a divalent metal cation as cofactor.

It localises to the cytoplasm. It carries out the reaction a ribonucleoside 5'-phosphate + H2O = a ribonucleoside + phosphate. Nucleotidase that shows phosphatase activity on nucleoside 5'-monophosphates. The polypeptide is 5'-nucleotidase SurE (Synechococcus sp. (strain CC9605)).